The primary structure comprises 176 residues: Acireductone dioxygenase (176 aa).

Residues His100, His102, Glu106, and His145 each contribute to the Fe(2+) site. The Ni(2+) site is built by His100, His102, Glu106, and His145.

It belongs to the acireductone dioxygenase (ARD) family. In terms of assembly, monomer. It depends on Fe(2+) as a cofactor. Ni(2+) is required as a cofactor.

It carries out the reaction 1,2-dihydroxy-5-(methylsulfanyl)pent-1-en-3-one + O2 = 3-(methylsulfanyl)propanoate + CO + formate + 2 H(+). The enzyme catalyses 1,2-dihydroxy-5-(methylsulfanyl)pent-1-en-3-one + O2 = 4-methylsulfanyl-2-oxobutanoate + formate + 2 H(+). The protein operates within amino-acid biosynthesis; L-methionine biosynthesis via salvage pathway; L-methionine from S-methyl-5-thio-alpha-D-ribose 1-phosphate: step 5/6. In terms of biological role, catalyzes 2 different reactions between oxygen and the acireductone 1,2-dihydroxy-3-keto-5-methylthiopentene (DHK-MTPene) depending upon the metal bound in the active site. Fe-containing acireductone dioxygenase (Fe-ARD) produces formate and 2-keto-4-methylthiobutyrate (KMTB), the alpha-ketoacid precursor of methionine in the methionine recycle pathway. Ni-containing acireductone dioxygenase (Ni-ARD) produces methylthiopropionate, carbon monoxide and formate, and does not lie on the methionine recycle pathway. This chain is Acireductone dioxygenase, found in Bacillus pumilus (strain SAFR-032).